We begin with the raw amino-acid sequence, 232 residues long: Esterase YpfH (232 aa).

Active-site charge relay system residues include S111, D159, and H191.

This sequence belongs to the AB hydrolase superfamily. AB hydrolase 2 family.

In terms of biological role, displays esterase activity toward palmitoyl-CoA and pNP-butyrate. This chain is Esterase YpfH (ypfH), found in Escherichia coli (strain K12).